A 211-amino-acid polypeptide reads, in one-letter code: Large ribosomal subunit protein uL4 (211 aa).

Positions 44–90 (ERQGTHSTLTKGEVRGGGKKPWRQKHTGKARTGSTRNPHWTGGGVVF) are disordered. The span at 60–72 (GGKKPWRQKHTGK) shows a compositional bias: basic residues.

The protein belongs to the universal ribosomal protein uL4 family. Part of the 50S ribosomal subunit.

One of the primary rRNA binding proteins, this protein initially binds near the 5'-end of the 23S rRNA. It is important during the early stages of 50S assembly. It makes multiple contacts with different domains of the 23S rRNA in the assembled 50S subunit and ribosome. Functionally, forms part of the polypeptide exit tunnel. The polypeptide is Large ribosomal subunit protein uL4 (Ureaplasma urealyticum serovar 10 (strain ATCC 33699 / Western)).